Consider the following 103-residue polypeptide: MGSSPILLVLAISIGLASACFLNSCPYRRYGRTIRCSSCGIENEGVCISEGRCCTNEECFMSTECSYSAVCPELFCKIGHHPGYCMKKGYCCTQGGCQTSAMC.

An N-terminal signal peptide occupies residues 1 to 19 (MGSSPILLVLAISIGLASA). Residues Cys-20 and Cys-25 are joined by a disulfide bond. The residue at position 30 (Tyr-30) is a Tyrosine amide. The propeptide occupies 31–103 (GRTIRCSSCG…QGGCQTSAMC (73 aa)).

It belongs to the vasopressin/oxytocin family. Detected in thermosensory AFD neurons, neurosecretory NSM cells, AVK interneurons, pharyngeal neuron M5, and the mechanosensory DVA neuron. Detected in male-specific CP motor neurons.

It is found in the secreted. In terms of biological role, ligand for the G-protein coupled receptor ntr-1. Plays a role in gustatory associative learning. Also plays a role in male mating behavior. The protein is Nematocin of Caenorhabditis elegans.